A 332-amino-acid polypeptide reads, in one-letter code: Glycerol-3-phosphate dehydrogenase [NAD(P)+] (332 aa).

NADPH-binding residues include Trp-11, Arg-30, and Lys-108. Residues Lys-108, Gly-137, and Ser-139 each contribute to the sn-glycerol 3-phosphate site. Position 141 (Ala-141) interacts with NADPH. Residues Lys-192, Asp-245, Ser-255, Arg-256, and Asn-257 each coordinate sn-glycerol 3-phosphate. Lys-192 functions as the Proton acceptor in the catalytic mechanism. An NADPH-binding site is contributed by Arg-256. The NADPH site is built by Val-280 and Glu-282.

It belongs to the NAD-dependent glycerol-3-phosphate dehydrogenase family.

The protein localises to the cytoplasm. The catalysed reaction is sn-glycerol 3-phosphate + NAD(+) = dihydroxyacetone phosphate + NADH + H(+). It carries out the reaction sn-glycerol 3-phosphate + NADP(+) = dihydroxyacetone phosphate + NADPH + H(+). Its pathway is membrane lipid metabolism; glycerophospholipid metabolism. Functionally, catalyzes the reduction of the glycolytic intermediate dihydroxyacetone phosphate (DHAP) to sn-glycerol 3-phosphate (G3P), the key precursor for phospholipid synthesis. This Burkholderia cenocepacia (strain HI2424) protein is Glycerol-3-phosphate dehydrogenase [NAD(P)+].